We begin with the raw amino-acid sequence, 480 residues long: uncharacterized protein (480 aa).

Residues 7 to 28 traverse the membrane as a helical segment; that stretch reads HVISIFETFGAYFINIFYNFLY. Asn73 and Asn195 each carry an N-linked (GlcNAc...) asparagine; by host glycan. Residues 195 to 235 adopt a coiled-coil conformation; sequence NRSLLYQIEELTSEKKSLLAELSTLRKKYEKRQSEYRRLVQ. Positions 297–332 are disordered; it reads ELTSKSPSNYPVPQSRTIVSKPSDNYPVPQSRSSKI. Residues 301-329 show a composition bias toward polar residues; that stretch reads KSPSNYPVPQSRTIVSKPSDNYPVPQSRS. N-linked (GlcNAc...) asparagine; by host glycosylation occurs at Asn455.

This sequence belongs to the asfivirus B475L family.

It localises to the host membrane. This is an uncharacterized protein from African swine fever virus (isolate Pig/Kenya/KEN-50/1950) (ASFV).